The chain runs to 182 residues: Crossover junction endodeoxyribonuclease RuvC (182 aa).

Active-site residues include D7, E69, and D141. D7, E69, and D141 together coordinate Mg(2+).

Belongs to the RuvC family. Homodimer which binds Holliday junction (HJ) DNA. The HJ becomes 2-fold symmetrical on binding to RuvC with unstacked arms; it has a different conformation from HJ DNA in complex with RuvA. In the full resolvosome a probable DNA-RuvA(4)-RuvB(12)-RuvC(2) complex forms which resolves the HJ. Mg(2+) serves as cofactor.

It localises to the cytoplasm. It catalyses the reaction Endonucleolytic cleavage at a junction such as a reciprocal single-stranded crossover between two homologous DNA duplexes (Holliday junction).. Functionally, the RuvA-RuvB-RuvC complex processes Holliday junction (HJ) DNA during genetic recombination and DNA repair. Endonuclease that resolves HJ intermediates. Cleaves cruciform DNA by making single-stranded nicks across the HJ at symmetrical positions within the homologous arms, yielding a 5'-phosphate and a 3'-hydroxyl group; requires a central core of homology in the junction. The consensus cleavage sequence is 5'-(A/T)TT(C/G)-3'. Cleavage occurs on the 3'-side of the TT dinucleotide at the point of strand exchange. HJ branch migration catalyzed by RuvA-RuvB allows RuvC to scan DNA until it finds its consensus sequence, where it cleaves and resolves the cruciform DNA. In Delftia acidovorans (strain DSM 14801 / SPH-1), this protein is Crossover junction endodeoxyribonuclease RuvC.